The following is a 434-amino-acid chain: Serine--tRNA ligase (434 aa).

239-241 (TAE) is an L-serine binding site. An ATP-binding site is contributed by 270–272 (RSE). Residue E293 participates in L-serine binding. An ATP-binding site is contributed by 357–360 (EISS). Residue S392 coordinates L-serine.

Belongs to the class-II aminoacyl-tRNA synthetase family. Type-1 seryl-tRNA synthetase subfamily. Homodimer. The tRNA molecule binds across the dimer.

Its subcellular location is the cytoplasm. The enzyme catalyses tRNA(Ser) + L-serine + ATP = L-seryl-tRNA(Ser) + AMP + diphosphate + H(+). It catalyses the reaction tRNA(Sec) + L-serine + ATP = L-seryl-tRNA(Sec) + AMP + diphosphate + H(+). The protein operates within aminoacyl-tRNA biosynthesis; selenocysteinyl-tRNA(Sec) biosynthesis; L-seryl-tRNA(Sec) from L-serine and tRNA(Sec): step 1/1. Catalyzes the attachment of serine to tRNA(Ser). Is also able to aminoacylate tRNA(Sec) with serine, to form the misacylated tRNA L-seryl-tRNA(Sec), which will be further converted into selenocysteinyl-tRNA(Sec). The polypeptide is Serine--tRNA ligase (Cupriavidus taiwanensis (strain DSM 17343 / BCRC 17206 / CCUG 44338 / CIP 107171 / LMG 19424 / R1) (Ralstonia taiwanensis (strain LMG 19424))).